The chain runs to 290 residues: 4-hydroxybenzoate octaprenyltransferase (290 aa).

A run of 8 helical transmembrane segments spans residues Ile24–Ile44, Val48–Asn68, Leu98–Ile118, Phe142–Ile162, Trp171–Ile191, Phe214–Glu234, Val239–Ile259, and Ala270–His290.

Belongs to the UbiA prenyltransferase family. It depends on Mg(2+) as a cofactor.

The protein resides in the cell inner membrane. It carries out the reaction all-trans-octaprenyl diphosphate + 4-hydroxybenzoate = 4-hydroxy-3-(all-trans-octaprenyl)benzoate + diphosphate. It participates in cofactor biosynthesis; ubiquinone biosynthesis. Its function is as follows. Catalyzes the prenylation of para-hydroxybenzoate (PHB) with an all-trans polyprenyl group. Mediates the second step in the final reaction sequence of ubiquinone-8 (UQ-8) biosynthesis, which is the condensation of the polyisoprenoid side chain with PHB, generating the first membrane-bound Q intermediate 3-octaprenyl-4-hydroxybenzoate. This is 4-hydroxybenzoate octaprenyltransferase from Blochmanniella pennsylvanica (strain BPEN).